A 183-amino-acid polypeptide reads, in one-letter code: Transcription factor 15 (183 aa).

Residues 24 to 46 (DEENRSESDTSDQSYGCCEGAEA) form a disordered region. The bHLH domain maps to 61 to 113 (KQRQAANARERDRTQSVNTAFTALRTLIPTEPVDRKLSKIETLRLASSYIAHL).

Heterodimer; efficient DNA binding requires dimerization with another bHLH protein.

It localises to the nucleus. Its function is as follows. Early transcription factor that plays a key role in somitogenesis, paraxial mesoderm development and regulation of stem cell pluripotency. Essential for the mesenchymal to epithelial transition associated with somite formation. Required for somite morphogenesis, thereby regulating patterning of the axial skeleton and skeletal muscles. Also plays a key role in regulation of stem cell pluripotency. Promotes pluripotency exit of embryonic stem cells (ESCs) by priming ESCs for differentiation. Acts as a key regulator of self-renewal of hematopoietic stem cells (HSCs) by mediating HSCs quiescence and long-term self-renewal. Acts by forming a heterodimer with another helix-loop-helix (bHLH) protein, that binds DNA on E-box motifs (5'-CANNTG-3') and activates transcription of target genes. In Gallus gallus (Chicken), this protein is Transcription factor 15 (TCF15).